Reading from the N-terminus, the 486-residue chain is Cytosol aminopeptidase (486 aa).

Positions 249 and 254 each coordinate Zn(2+). Residue Lys261 is part of the active site. Zn(2+) contacts are provided by Asp272, Asp331, and Glu333. Arg335 is an active-site residue.

It belongs to the peptidase M17 family. In terms of assembly, homohexamer. Zn(2+) is required as a cofactor.

Its subcellular location is the cytoplasm. The enzyme catalyses Release of an N-terminal amino acid, Xaa-|-Yaa-, in which Xaa is preferably Leu, but may be other amino acids including Pro although not Arg or Lys, and Yaa may be Pro. Amino acid amides and methyl esters are also readily hydrolyzed, but rates on arylamides are exceedingly low.. The catalysed reaction is Release of N-terminal proline from a peptide.. In terms of biological role, presumably involved in the processing and regular turnover of intracellular proteins. Catalyzes the removal of unsubstituted N-terminal amino acids from various peptides. This Encephalitozoon cuniculi (strain GB-M1) (Microsporidian parasite) protein is Cytosol aminopeptidase.